A 119-amino-acid polypeptide reads, in one-letter code: Large ribosomal subunit protein bL20 (119 aa).

The protein belongs to the bacterial ribosomal protein bL20 family.

In terms of biological role, binds directly to 23S ribosomal RNA and is necessary for the in vitro assembly process of the 50S ribosomal subunit. It is not involved in the protein synthesizing functions of that subunit. The protein is Large ribosomal subunit protein bL20 of Shouchella clausii (strain KSM-K16) (Alkalihalobacillus clausii).